The chain runs to 336 residues: Aspartate carbamoyltransferase catalytic subunit (336 aa).

Arg-72 and Thr-73 together coordinate carbamoyl phosphate. An L-aspartate-binding site is contributed by Lys-100. Carbamoyl phosphate-binding residues include Arg-122, His-155, and Gln-158. 2 residues coordinate L-aspartate: Arg-188 and Arg-242. Gly-288 and Pro-289 together coordinate carbamoyl phosphate.

The protein belongs to the aspartate/ornithine carbamoyltransferase superfamily. ATCase family. Heterododecamer (2C3:3R2) of six catalytic PyrB chains organized as two trimers (C3), and six regulatory PyrI chains organized as three dimers (R2).

The enzyme catalyses carbamoyl phosphate + L-aspartate = N-carbamoyl-L-aspartate + phosphate + H(+). The protein operates within pyrimidine metabolism; UMP biosynthesis via de novo pathway; (S)-dihydroorotate from bicarbonate: step 2/3. Functionally, catalyzes the condensation of carbamoyl phosphate and aspartate to form carbamoyl aspartate and inorganic phosphate, the committed step in the de novo pyrimidine nucleotide biosynthesis pathway. This chain is Aspartate carbamoyltransferase catalytic subunit, found in Lactobacillus leichmannii.